We begin with the raw amino-acid sequence, 233 residues long: Cilia- and flagella-associated protein 299 (233 aa).

The protein localises to the cytoplasm. Its subcellular location is the nucleus. Its function is as follows. May be involved in spermatogenesis. In Xenopus laevis (African clawed frog), this protein is Cilia- and flagella-associated protein 299.